A 452-amino-acid chain; its full sequence is FAD-linked oxidoreductase DDB_G0289697 (452 aa).

An FAD-binding PCMH-type domain is found at 44–212; that stretch reads VVNTPLLIVY…TDFTFKLHPV (169 aa). Histidine 81 carries the pros-8alpha-FAD histidine modification.

This sequence belongs to the oxygen-dependent FAD-linked oxidoreductase family. It depends on FAD as a cofactor.

This chain is FAD-linked oxidoreductase DDB_G0289697, found in Dictyostelium discoideum (Social amoeba).